We begin with the raw amino-acid sequence, 173 residues long: ATP synthase subunit b (173 aa).

The chain crosses the membrane as a helical span at residues 18–38 (IFWSLVILIIVAVFFYKFFLP).

It belongs to the ATPase B chain family. In terms of assembly, F-type ATPases have 2 components, F(1) - the catalytic core - and F(0) - the membrane proton channel. F(1) has five subunits: alpha(3), beta(3), gamma(1), delta(1), epsilon(1). F(0) has three main subunits: a(1), b(2) and c(10-14). The alpha and beta chains form an alternating ring which encloses part of the gamma chain. F(1) is attached to F(0) by a central stalk formed by the gamma and epsilon chains, while a peripheral stalk is formed by the delta and b chains.

The protein localises to the cell membrane. In terms of biological role, f(1)F(0) ATP synthase produces ATP from ADP in the presence of a proton or sodium gradient. F-type ATPases consist of two structural domains, F(1) containing the extramembraneous catalytic core and F(0) containing the membrane proton channel, linked together by a central stalk and a peripheral stalk. During catalysis, ATP synthesis in the catalytic domain of F(1) is coupled via a rotary mechanism of the central stalk subunits to proton translocation. Its function is as follows. Component of the F(0) channel, it forms part of the peripheral stalk, linking F(1) to F(0). The sequence is that of ATP synthase subunit b from Bifidobacterium adolescentis (strain ATCC 15703 / DSM 20083 / NCTC 11814 / E194a).